A 165-amino-acid polypeptide reads, in one-letter code: E3 ubiquitin ligase complex SCF subunit sconC (165 aa).

Residues 106–165 (ILAANYLDIKALLDVGCKTVANMIKGKSPEEIRKTFNIQNDFTPEEEDQIRRENEWAEDR) are interaction with the F-box domain of F-box proteins.

Belongs to the SKP1 family. Component of the SCF (SKP1-CUL1-F-box protein) E3 ubiquitin ligase complexes.

It participates in protein modification; protein ubiquitination. Essential component of the SCF (SKP1-CUL1-F-box protein) E3 ubiquitin ligase complexes, which mediate the ubiquitination and subsequent proteasomal degradation of target proteins. Controls sulfur metabolite repression, probably by mediating the inactivation or degradation of the metR transcription factor. This chain is E3 ubiquitin ligase complex SCF subunit sconC (sconC), found in Arthroderma otae (strain ATCC MYA-4605 / CBS 113480) (Microsporum canis).